The sequence spans 1127 residues: WD repeat and HMG-box DNA-binding protein 1 (1127 aa).

WD repeat units lie at residues 11–50 (GHPEGHTDVCFDDSGNFLVTCGSDGDIRIWESLDDDDPKS), 52–91 (SIGEKAYSFALKNGKVVTAASNNAIQLHTFPDGEPDGILT), 92–131 (RFTTNANHVVFNTDGTRIAAGSGDFLVKVLQVEDSTQQKT), 134–173 (GHSAPVLSVSFDPKDIYLASASCDGSVRIWKISDQTCEAV), 184–223 (FNAKSICRLAWQPKSGKFVAIPVGKAVHLYDRDSLKNICT), 228–267 (FITQPVNIVAWSPCGQYLVAGSVDGCIVAWNIATKACLER), and 271–310 (EKGYTICALAWHPHLPQIAYTDNEGNLGLLEDVCQGDVKQ). 2 disordered regions span residues 811-1013 (AAEQ…AENK) and 1064-1127 (KAKG…FKKE). Positions 819-829 (QNEEEDEEEED) are enriched in acidic residues. Residues 846–857 (GDSRAKPVKQDQ) show a composition bias toward basic and acidic residues. A compositionally biased stretch (acidic residues) spans 858 to 877 (YEENNEEEMEEEEKEQEEAL). Composition is skewed to polar residues over residues 881-891 (TPTANPFNKSV) and 918-937 (SASQKSPAFASNSSRSTSIL). Low complexity predominate over residues 948 to 960 (SASGSPSTSKSDS). The segment at residues 1013–1076 (KKPKTGFQLW…GDYPGEDGAD (64 aa)) is a DNA-binding region (HMG box). A compositionally biased stretch (polar residues) spans 1087–1100 (NMASNGCPQENTDS).

In terms of assembly, homodimer. As to expression, found in oocytes and in various other cells.

It is found in the nucleus. It localises to the nucleoplasm. The protein localises to the cytoplasm. In terms of biological role, core replisome component that acts as a replication initiation factor. Binds directly to the CMG complex and functions as a hub to recruit additional proteins to the replication fork. The polypeptide is WD repeat and HMG-box DNA-binding protein 1 (wdhd1) (Xenopus laevis (African clawed frog)).